The following is a 391-amino-acid chain: MAIINMSELDLQGKRVLIREDLNVPVSDGVVTSDARLRAALPTIKLALEKGAAVMVMSHLGRPTEGEFNAEFSLQPVVNYLTKALECPVRLANDYLDGVEANVGELVVFENVRFNVGEKKNDEALAKKLAALCDVYVMDAFGTAHRAQASTHGVGLHAPVACAGPLLAGELEALGKAMDNPARPLVAIVGGSKVSTKLTVLESLSGIVDQLVVGGGIANTFIAAAGHEVGKSLYEANLIEEAKRLVANAQSRGGDIPVPTDVVVAGEFSPTASATLKDVSEVTSDDMIFDIGPDSAEALSEILKNAGTIVWNGPVGVFEFDQFGEGTKRIAQAIAESDAFSIAGGGDTLAAVDKYDIADKVSYISTGGGAFLEFLEGKELPAVAMLESRGE.

Substrate-binding positions include 21–23, arginine 36, 59–62, arginine 113, and arginine 146; these read DLN and HLGR. ATP-binding positions include lysine 197, glutamate 319, and 345-348; that span reads GGDT.

It belongs to the phosphoglycerate kinase family. In terms of assembly, monomer.

Its subcellular location is the cytoplasm. It carries out the reaction (2R)-3-phosphoglycerate + ATP = (2R)-3-phospho-glyceroyl phosphate + ADP. Its pathway is carbohydrate degradation; glycolysis; pyruvate from D-glyceraldehyde 3-phosphate: step 2/5. This is Phosphoglycerate kinase from Shewanella sediminis (strain HAW-EB3).